Reading from the N-terminus, the 158-residue chain is Urease accessory protein UreE (158 aa).

It belongs to the UreE family.

Its subcellular location is the cytoplasm. Its function is as follows. Involved in urease metallocenter assembly. Binds nickel. Probably functions as a nickel donor during metallocenter assembly. The sequence is that of Urease accessory protein UreE from Corynebacterium urealyticum (strain ATCC 43042 / DSM 7109).